Here is a 323-residue protein sequence, read N- to C-terminus: Elongation factor P--(R)-beta-lysine ligase (323 aa).

Residue 74 to 76 participates in substrate binding; the sequence is SPE. ATP contacts are provided by residues 98 to 100 and Asn107; that span reads RNE. Substrate is bound at residue Tyr116. 242–243 contributes to the ATP binding site; the sequence is EL. Glu249 is a binding site for substrate. Residue Gly298 coordinates ATP.

Belongs to the class-II aminoacyl-tRNA synthetase family. EpmA subfamily. In terms of assembly, homodimer.

The catalysed reaction is D-beta-lysine + L-lysyl-[protein] + ATP = N(6)-((3R)-3,6-diaminohexanoyl)-L-lysyl-[protein] + AMP + diphosphate + H(+). Its function is as follows. With EpmB is involved in the beta-lysylation step of the post-translational modification of translation elongation factor P (EF-P). Catalyzes the ATP-dependent activation of (R)-beta-lysine produced by EpmB, forming a lysyl-adenylate, from which the beta-lysyl moiety is then transferred to the epsilon-amino group of a conserved specific lysine residue in EF-P. The protein is Elongation factor P--(R)-beta-lysine ligase of Photobacterium profundum (strain SS9).